We begin with the raw amino-acid sequence, 236 residues long: Small ribosomal subunit protein uS2c (236 aa).

Belongs to the universal ribosomal protein uS2 family.

The protein localises to the plastid. Its subcellular location is the chloroplast. The sequence is that of Small ribosomal subunit protein uS2c (rps2) from Draba nemorosa (Woodland whitlowgrass).